Here is a 508-residue protein sequence, read N- to C-terminus: 4-trimethylaminobutyraldehyde dehydrogenase A (508 aa).

Residues Lys-194 and Gly-246–Thr-250 contribute to the NAD(+) site. The active-site Proton acceptor is the Glu-268. Catalysis depends on Cys-302, which acts as the Nucleophile. Glu-405 contributes to the NAD(+) binding site.

Belongs to the aldehyde dehydrogenase family. Homotetramer.

Its subcellular location is the cytoplasm. It is found in the cytosol. The enzyme catalyses 4-(trimethylamino)butanal + NAD(+) + H2O = 4-(trimethylamino)butanoate + NADH + 2 H(+). It carries out the reaction an aldehyde + NAD(+) + H2O = a carboxylate + NADH + 2 H(+). It functions in the pathway amine and polyamine biosynthesis; carnitine biosynthesis. In terms of biological role, converts gamma-trimethylaminobutyraldehyde into gamma-butyrobetaine with high efficiency (in vitro). Can catalyze the irreversible oxidation of a broad range of aldehydes to the corresponding acids in an NAD-dependent reaction, but with low efficiency. This is 4-trimethylaminobutyraldehyde dehydrogenase A (aldh9a1a) from Danio rerio (Zebrafish).